The sequence spans 512 residues: Cytochrome P450 72A11 (512 aa).

A helical membrane pass occupies residues 2–22 (EISVASVTVSVAVVVVSWWVW). A heme-binding site is contributed by Cys-460.

This sequence belongs to the cytochrome P450 family. Heme is required as a cofactor.

Its subcellular location is the membrane. This Arabidopsis thaliana (Mouse-ear cress) protein is Cytochrome P450 72A11 (CYP72A11).